The primary structure comprises 346 residues: Phosphate acyltransferase (346 aa).

It belongs to the PlsX family. As to quaternary structure, homodimer. Probably interacts with PlsY.

The protein localises to the cytoplasm. The catalysed reaction is a fatty acyl-[ACP] + phosphate = an acyl phosphate + holo-[ACP]. Its pathway is lipid metabolism; phospholipid metabolism. In terms of biological role, catalyzes the reversible formation of acyl-phosphate (acyl-PO(4)) from acyl-[acyl-carrier-protein] (acyl-ACP). This enzyme utilizes acyl-ACP as fatty acyl donor, but not acyl-CoA. The polypeptide is Phosphate acyltransferase (Crocosphaera subtropica (strain ATCC 51142 / BH68) (Cyanothece sp. (strain ATCC 51142))).